A 226-amino-acid chain; its full sequence is Lysosomal-associated transmembrane protein 4B (226 aa).

4 helical membrane-spanning segments follow: residues 26–46, 72–92, 100–120, and 153–173; these read ILLG…LLSA, MCIA…ATYG, WIIP…LVAV, and CLVL…GYLI. Residues 205-221 form a required for NEDD4 interaction region; it reads PPYDDATVNSATKEPPP.

Belongs to the LAPTM4/LAPTM5 transporter family. In terms of assembly, homooligomer; upon reaching the lysosomes. Interacts with MCOLN1. Interacts with NEDD4; may play a role in the lysosomal sorting of LAPTM4B; enhances HGS association with NEDD4; mediates inhibition of EGFR degradation. Interacts with PIP5K1C; promotes SNX5 association with LAPTM4B; kinase activity of PIP5K1C is required; interaction is regulated by phosphatidylinositol 4,5-bisphosphate generated by PIP5K1C. Interacts with HGS; promotes HGS ubiquitination. Interacts with SNX5. Interacts with SLC3A2 and SLC7A5; recruits SLC3A2 and SLC7A5 to lysosomes to promote leucine uptake into these organelles and is required for mTORC1 activation. Interacts with LRRC32; decreases TGFB1 production in regulatory T cells. Interacts with BECN1; competes with EGFR for LAPTM4B binding; regulates EGFR activity. Interacts with EGFR; positively correlates with EGFR activation. In terms of processing, undergoes proteolytic cleavage following delivery to the lysosomes. Ubiquitinated by NEDD4. As to expression, strongly expressed in fetal ovary, testis, adrenal gland, liver and uterus, and weakly expressed in the spleen.

The protein resides in the endomembrane system. The protein localises to the late endosome membrane. It is found in the cell membrane. Its subcellular location is the cell projection. It localises to the lysosome membrane. The protein resides in the endosome membrane. The protein localises to the endosome. It is found in the multivesicular body membrane. Its subcellular location is the multivesicular body lumen. In terms of biological role, required for optimal lysosomal function. Blocks EGF-stimulated EGFR intraluminal sorting and degradation. Conversely by binding with the phosphatidylinositol 4,5-bisphosphate, regulates its PIP5K1C interaction, inhibits HGS ubiquitination and relieves LAPTM4B inhibition of EGFR degradation. Recruits SLC3A2 and SLC7A5 (the Leu transporter) to the lysosome, promoting entry of leucine and other essential amino acid (EAA) into the lysosome, stimulating activation of proton-transporting vacuolar (V)-ATPase protein pump (V-ATPase) and hence mTORC1 activation. Plays a role as negative regulator of TGFB1 production in regulatory T cells. Binds ceramide and facilitates its exit from late endosome in order to control cell death pathways. In Bos taurus (Bovine), this protein is Lysosomal-associated transmembrane protein 4B.